The sequence spans 271 residues: 2-aminophenol 1,6-dioxygenase alpha subunit (271 aa).

The protein belongs to the LigB/MhpB extradiol dioxygenase family. Heterotetramer of 2 alpha and 2 beta subunits.

Functionally, component of the 2-aminophenol 1,6-dioxygenase complex that catalyzes the ring fission of 2-aminophenol to produce 2-aminomuconic 6-semialdehyde. AmnA seems to have a role in the stability of the complex. The chain is 2-aminophenol 1,6-dioxygenase alpha subunit (amnA) from Pseudomonas sp.